The primary structure comprises 140 residues: Methylglyoxal synthase (140 aa).

Residues 1–140 (MKIALIAHDR…HDQDSNPINL (140 aa)) form the MGS-like domain. Substrate-binding positions include His-8, Lys-12, 34–37 (TGTT), and 54–55 (SG). The Proton donor/acceptor role is filled by Asp-60. A substrate-binding site is contributed by His-87.

It belongs to the methylglyoxal synthase family.

The catalysed reaction is dihydroxyacetone phosphate = methylglyoxal + phosphate. Its function is as follows. Catalyzes the formation of methylglyoxal from dihydroxyacetone phosphate. The polypeptide is Methylglyoxal synthase (Latilactobacillus sakei subsp. sakei (strain 23K) (Lactobacillus sakei subsp. sakei)).